The following is a 144-amino-acid chain: Transmembrane protein 170A (144 aa).

Over 1 to 50 the chain is Extracellular; that stretch reads MEREGSGGGGGSAGLLQQILSLKLVPRVGNGTLCPNSTSLCSFPEMWYGV. N-linked (GlcNAc...) asparagine glycosylation is found at asparagine 30 and asparagine 36. A helical transmembrane segment spans residues 51-71; it reads FLWALMSSVFFHVPAGLLALF. Over 72-85 the chain is Cytoplasmic; it reads TLRHHKYGRFMSVS. A helical transmembrane segment spans residues 86–106; the sequence is ILLMGIVGPITAGILTSAAIA. Residues 107-116 are Extracellular-facing; it reads GVYRAAGKEM. The helical transmembrane segment at 117–137 threads the bilayer; the sequence is IPFEALTLGTGQTFCVVVVSF. Residues 138 to 144 lie on the Cytoplasmic side of the membrane; sequence LRVLATL.

The protein belongs to the TMEM170 family. As to quaternary structure, interacts with RTN4.

Its subcellular location is the endoplasmic reticulum membrane. It is found in the nucleus envelope. Functionally, acts as a regulator of endoplasmic reticulum (ER) and nuclear envelope (NE) morphogenesis. Affects the ratio between tubular ER and ER sheets by promoting sheet formation at the expense of tubules. Influences NE expansion, nuclear pore complex formation and proper localization of inner nuclear membrane proteins. The polypeptide is Transmembrane protein 170A (Tmem170a) (Mus musculus (Mouse)).